The primary structure comprises 155 residues: Transcriptional repressor NrdR (155 aa).

Residues 3 to 34 fold into a zinc finger; it reads CPYCGHLEDRVVDSRETQDGQATRRRRACLSC. One can recognise an ATP-cone domain in the interval 49–139; that stretch reads PQVVKKDGRR…VYRAFRDVGE (91 aa).

This sequence belongs to the NrdR family. The cofactor is Zn(2+).

Functionally, negatively regulates transcription of bacterial ribonucleotide reductase nrd genes and operons by binding to NrdR-boxes. The chain is Transcriptional repressor NrdR from Anaeromyxobacter sp. (strain K).